Consider the following 1337-residue polypeptide: Phosphoribosylformylglycinamidine synthase (1337 aa).

S215 bears the Phosphoserine mark. ATP contacts are provided by residues 322 to 333 and 402 to 404; these read GATTGTGGRIRD and AGF. Phosphothreonine occurs at positions 619 and 622. An ATP-binding site is contributed by A705. The Mg(2+) site is built by D706, E745, N749, and D908. An ATP-binding site is contributed by S910. Residues 1063-1301 enclose the Glutamine amidotransferase type-1 domain; it reads RVAILREEGS…ALMPHPERAV (239 aa). C1157 functions as the Nucleophile in the catalytic mechanism. Active-site residues include H1296 and E1298.

In the N-terminal section; belongs to the FGAMS family.

It localises to the cytoplasm. It carries out the reaction N(2)-formyl-N(1)-(5-phospho-beta-D-ribosyl)glycinamide + L-glutamine + ATP + H2O = 2-formamido-N(1)-(5-O-phospho-beta-D-ribosyl)acetamidine + L-glutamate + ADP + phosphate + H(+). The protein operates within purine metabolism; IMP biosynthesis via de novo pathway; 5-amino-1-(5-phospho-D-ribosyl)imidazole from N(2)-formyl-N(1)-(5-phospho-D-ribosyl)glycinamide: step 1/2. Phosphoribosylformylglycinamidine synthase involved in the purines biosynthetic pathway. Catalyzes the ATP-dependent conversion of formylglycinamide ribonucleotide (FGAR) and glutamine to yield formylglycinamidine ribonucleotide (FGAM) and glutamate. In Mus musculus (Mouse), this protein is Phosphoribosylformylglycinamidine synthase (Pfas).